Here is a 307-residue protein sequence, read N- to C-terminus: Homoserine kinase (307 aa).

ATP is bound at residue 95–105 (PQSRGLGSSAS).

This sequence belongs to the GHMP kinase family. Homoserine kinase subfamily.

The protein localises to the cytoplasm. It carries out the reaction L-homoserine + ATP = O-phospho-L-homoserine + ADP + H(+). It participates in amino-acid biosynthesis; L-threonine biosynthesis; L-threonine from L-aspartate: step 4/5. Its function is as follows. Catalyzes the ATP-dependent phosphorylation of L-homoserine to L-homoserine phosphate. In Corynebacterium aurimucosum (strain ATCC 700975 / DSM 44827 / CIP 107346 / CN-1) (Corynebacterium nigricans), this protein is Homoserine kinase.